The following is a 271-amino-acid chain: Elongation factor Ts (271 aa).

The involved in Mg(2+) ion dislocation from EF-Tu stretch occupies residues 76 to 79 (TDFV).

It belongs to the EF-Ts family.

It localises to the cytoplasm. Functionally, associates with the EF-Tu.GDP complex and induces the exchange of GDP to GTP. It remains bound to the aminoacyl-tRNA.EF-Tu.GTP complex up to the GTP hydrolysis stage on the ribosome. This Saccharopolyspora erythraea (strain ATCC 11635 / DSM 40517 / JCM 4748 / NBRC 13426 / NCIMB 8594 / NRRL 2338) protein is Elongation factor Ts.